A 127-amino-acid polypeptide reads, in one-letter code: Single-stranded DNA-binding protein 2 (127 aa).

Residues 4–103 (INKVMLVGRC…ITINTIELLG (100 aa)) form the SSB domain. A disordered region spans residues 104 to 127 (SPRKEESTSTSAPNETQAVANANF). A compositionally biased stretch (polar residues) spans 111–127 (TSTSAPNETQAVANANF).

Homotetramer.

In Nostoc sp. (strain PCC 7120 / SAG 25.82 / UTEX 2576), this protein is Single-stranded DNA-binding protein 2 (ssb2).